A 770-amino-acid chain; its full sequence is Protein PAT1 homolog 1 (770 aa).

A disordered region spans residues 1–26 (MFRYESLEDCPLDEDEDAFQGLGEED). Positions 1 to 84 (MFRYESLEDC…EMDLLGDHEE (84 aa)) are region A; interaction with DDX6/RCK. Residues 1–397 (MFRYESLEDC…HRSSHQDHLR (397 aa)) are involved in nuclear foci localization. Over residues 7 to 26 (LEDCPLDEDEDAFQGLGEED) the composition is skewed to acidic residues. The tract at residues 85 to 388 (NLAERLSKMV…LNGAGDRGSH (304 aa)) is region N; interaction with decapping machinery. A Nuclear export signal motif is present at residues 86–95 (LAERLSKMVI). Ser-177 is modified (phosphoserine). Position 178 is a phosphothreonine (Thr-178). Residues Ser-179 and Ser-184 each carry the phosphoserine modification. Thr-194 carries the phosphothreonine modification. 3 positions are modified to asymmetric dimethylarginine: Arg-217, Arg-223, and Arg-263. Residues 223–397 (RYPAPYGERM…HRSSHQDHLR (175 aa)) are involved in RNA-binding. Ser-278 carries the phosphoserine modification. At Arg-284 the chain carries Asymmetric dimethylarginine. A compositionally biased stretch (low complexity) spans 314-323 (GFRAFFSAPP). Disordered regions lie at residues 314–344 (GFRAFFSAPPSATPPPQQHPPGPGPHLQNLR) and 360–399 (QHRRLLHQRQQQNRSQHRNLNGAGDRGSHRSSHQDHLRKD). A compositionally biased stretch (pro residues) spans 324 to 337 (SATPPPQQHPPGPG). The span at 367 to 380 (QRQQQNRSQHRNLN) shows a compositional bias: low complexity. At Arg-385 the chain carries Omega-N-methylarginine. Basic and acidic residues predominate over residues 385–399 (RGSHRSSHQDHLRKD). Positions 389 to 448 (RSSHQDHLRKDPYANLMLQREKDWVSKIQMMQLQSTDPYLDDFYYQNYFEKLEKLSAAEE) are region H. Residues 398 to 770 (KDPYANLMLQ…TKLQLVQGIR (373 aa)) are involved in nuclear speckle localization. The tract at residues 449-770 (IQGDGPKKER…TKLQLVQGIR (322 aa)) is region C.

This sequence belongs to the PAT1 family. As to quaternary structure, interacts (via region A) with DDX6/RCK. Interacts (via region H and region C) with LSM1 and LSM4. Interacts (via region N) with DCP1A, DCP2, EDC3, EDC4 and XRN1. Interacts with the CCR4-NOT complex. Interacts with the Lsm-containing SMN-Sm protein complex. Interacts with EIF4ENIF1/4E-T. As to expression, ubiquitous.

Its subcellular location is the cytoplasm. It is found in the P-body. The protein resides in the nucleus. The protein localises to the PML body. It localises to the nucleus speckle. RNA-binding protein involved in deadenylation-dependent decapping of mRNAs, leading to the degradation of mRNAs. Acts as a scaffold protein that connects deadenylation and decapping machinery. Required for cytoplasmic mRNA processing body (P-body) assembly. Its function is as follows. (Microbial infection) In case of infection, required for translation and replication of hepatitis C virus (HCV). The protein is Protein PAT1 homolog 1 (PATL1) of Homo sapiens (Human).